A 490-amino-acid polypeptide reads, in one-letter code: Gram-negative bacteria-binding protein 3 (490 aa).

The first 25 residues, 1-25 (MADALRFVAWSCCLQLLFLLLGVQG), serve as a signal peptide directing secretion. Residues 26-126 (YEVPKAKIDV…GSFVVNGYSG (101 aa)) form the CBM39 domain. Residues 162–490 (TEVNGAPTRC…KIDYVKVYSL (329 aa)) enclose the GH16 domain. N-linked (GlcNAc...) asparagine glycosylation is found at Asn362 and Asn373.

Belongs to the insect beta-1,3-glucan binding protein family.

The protein localises to the secreted. Its function is as follows. Involved in the recognition of invading microorganisms. Binds specifically to beta-1,3-glucan and activates the phenoloxidase cascade. This is Gram-negative bacteria-binding protein 3 from Drosophila melanogaster (Fruit fly).